Consider the following 417-residue polypeptide: Gamma-glutamyl phosphate reductase (417 aa).

This sequence belongs to the gamma-glutamyl phosphate reductase family.

It localises to the cytoplasm. It catalyses the reaction L-glutamate 5-semialdehyde + phosphate + NADP(+) = L-glutamyl 5-phosphate + NADPH + H(+). It participates in amino-acid biosynthesis; L-proline biosynthesis; L-glutamate 5-semialdehyde from L-glutamate: step 2/2. In terms of biological role, catalyzes the NADPH-dependent reduction of L-glutamate 5-phosphate into L-glutamate 5-semialdehyde and phosphate. The product spontaneously undergoes cyclization to form 1-pyrroline-5-carboxylate. The polypeptide is Gamma-glutamyl phosphate reductase (Idiomarina loihiensis (strain ATCC BAA-735 / DSM 15497 / L2-TR)).